A 281-amino-acid chain; its full sequence is 2-dehydro-3-deoxyphosphooctonate aldolase (281 aa).

It belongs to the KdsA family.

It is found in the cytoplasm. It catalyses the reaction D-arabinose 5-phosphate + phosphoenolpyruvate + H2O = 3-deoxy-alpha-D-manno-2-octulosonate-8-phosphate + phosphate. Its pathway is carbohydrate biosynthesis; 3-deoxy-D-manno-octulosonate biosynthesis; 3-deoxy-D-manno-octulosonate from D-ribulose 5-phosphate: step 2/3. It functions in the pathway bacterial outer membrane biogenesis; lipopolysaccharide biosynthesis. This is 2-dehydro-3-deoxyphosphooctonate aldolase from Azotobacter vinelandii (strain DJ / ATCC BAA-1303).